Consider the following 123-residue polypeptide: Small ribosomal subunit protein uS11 (123 aa).

Residues Met1–Ala22 are disordered.

This sequence belongs to the universal ribosomal protein uS11 family. In terms of assembly, part of the 30S ribosomal subunit. Interacts with proteins S7 and S18. Binds to IF-3.

Located on the platform of the 30S subunit, it bridges several disparate RNA helices of the 16S rRNA. Forms part of the Shine-Dalgarno cleft in the 70S ribosome. This is Small ribosomal subunit protein uS11 from Malacoplasma penetrans (strain HF-2) (Mycoplasma penetrans).